We begin with the raw amino-acid sequence, 272 residues long: Phosphatidylglycerol--prolipoprotein diacylglyceryl transferase (272 aa).

7 consecutive transmembrane segments (helical) span residues 17–37 (LQVH…WGLA), 55–75 (LVFY…VLFY), 90–110 (VWTG…AMLF), 125–145 (FIAP…FIGG), 174–194 (PSQI…LWWF), 202–222 (MAVS…MEFF), and 230–250 (GFIL…MLLI). R138 provides a ligand contact to a 1,2-diacyl-sn-glycero-3-phospho-(1'-sn-glycerol).

The protein belongs to the Lgt family.

Its subcellular location is the cell inner membrane. The enzyme catalyses L-cysteinyl-[prolipoprotein] + a 1,2-diacyl-sn-glycero-3-phospho-(1'-sn-glycerol) = an S-1,2-diacyl-sn-glyceryl-L-cysteinyl-[prolipoprotein] + sn-glycerol 1-phosphate + H(+). It participates in protein modification; lipoprotein biosynthesis (diacylglyceryl transfer). Its function is as follows. Catalyzes the transfer of the diacylglyceryl group from phosphatidylglycerol to the sulfhydryl group of the N-terminal cysteine of a prolipoprotein, the first step in the formation of mature lipoproteins. The sequence is that of Phosphatidylglycerol--prolipoprotein diacylglyceryl transferase from Acinetobacter baumannii (strain ACICU).